We begin with the raw amino-acid sequence, 606 residues long: Zinc metalloproteinase-disintegrin-like HF3 (606 aa).

An N-terminal signal peptide occupies residues 1–20 (MIQVLLVTICLAAFPYQGSS). Residues 21-190 (IILESGNVND…KKASQLVVTA (170 aa)) constitute a propeptide that is removed on maturation. The region spanning 199–395 (KYIELVILAD…YKPQCILNEP (197 aa)) is the Peptidase M12B domain. E202 provides a ligand contact to Ca(2+). A glycan (N-linked (GlcNAc...) asparagine) is linked at N259. Residue D286 coordinates Ca(2+). Cystine bridges form between C310-C390, C350-C374, and C352-C357. N313 is a glycosylation site (N-linked (GlcNAc...) asparagine). Residue H335 coordinates Zn(2+). E336 is an active-site residue. H339 and H345 together coordinate Zn(2+). N373 carries an N-linked (GlcNAc...) asparagine glycan. C390, N393, V405, N408, L410, E412, E415, and D418 together coordinate Ca(2+). Residues 403–489 (PPVCGNELLE…DCPTDDFKRN (87 aa)) form the Disintegrin domain. Cystine bridges form between C406/C435, C417/C430, C419/C425, C429/C452, C443/C449, C448/C474, C461/C481, C468/C500, C493/C505, C512/C562, C527/C569, C540/C550, C557/C594, and C588/C599. Residues 467–469 (ECD) carry the D/ECD-tripeptide motif. Ca(2+) contacts are provided by D469, E472, and D484. A glycan (N-linked (GlcNAc...) asparagine) is linked at N519. N584 is a glycosylation site (N-linked (GlcNAc...) asparagine).

It belongs to the venom metalloproteinase (M12B) family. P-III subfamily. P-IIIa sub-subfamily. Monomer. Zn(2+) is required as a cofactor. Expressed by the venom gland.

Its subcellular location is the secreted. In terms of biological role, the metalloproteinase-disintegrin-like HF3 is a potent hemorrhagic toxin that activates macrophages for phagocytosis through integrin alpha-M/beta-2 (ITGAM/ITGB2). It inhibits collagen-induced platelet aggregation. This protein shows cleavage specificity for substrate for leucine at P1' position, followed by hydrophobic residues in P2'. In Bothrops jararaca (Jararaca), this protein is Zinc metalloproteinase-disintegrin-like HF3.